The chain runs to 287 residues: MVITALARAKINLTLDVLGKRPDGYHEVEMVMQSIELHDRLEFRPCAAGGISLAVEGADLPPGKENLVYRAAELLRAAGGVRAGAEIRLKKAIPVAAGLGGGSADAAAALVALNEMWNTGFSPAGLMELAEQLGSDVPFGLMGGTALARGRGERLERLFPCPPLGLVLVKPPFGVSTAEVYRAFKPGLNPKKADAQAMVRAIKKGDAADIAACLGNALEPVTVKMYPEVAEIKKKLMEAGALGALMAGSGPTVFGLTADLESARQVAARYRRTDEQILVTRTFNPRL.

Lys-10 is a catalytic residue. Pro-94 to Ala-104 serves as a coordination point for ATP. Asp-136 is a catalytic residue.

The protein belongs to the GHMP kinase family. IspE subfamily.

It carries out the reaction 4-CDP-2-C-methyl-D-erythritol + ATP = 4-CDP-2-C-methyl-D-erythritol 2-phosphate + ADP + H(+). It functions in the pathway isoprenoid biosynthesis; isopentenyl diphosphate biosynthesis via DXP pathway; isopentenyl diphosphate from 1-deoxy-D-xylulose 5-phosphate: step 3/6. In terms of biological role, catalyzes the phosphorylation of the position 2 hydroxy group of 4-diphosphocytidyl-2C-methyl-D-erythritol. In Pelotomaculum thermopropionicum (strain DSM 13744 / JCM 10971 / SI), this protein is 4-diphosphocytidyl-2-C-methyl-D-erythritol kinase.